The chain runs to 676 residues: MSTNILQHVKQLLHNRDVFSFFHNKTGNLNYLDNTTQKPEVFVSPNSTIVSAPTLDSFQALMEKGNFTTLQLAKVGIRMFFSYSVSKYAVLCFSTAIILNRLTVMSSLRSNSTNIRLPLWSKTLLHLVATLSLVKALLQILSQFGLMHELHVSDTDFYALSVYLFVALSDCIEIFISSTTNVPSLICSDFSIWGLSLNLYIISKMPAGQQHIGDNVELLGAVFHRLVIHLVELFHIRAYRLCGEVILNAGFFTAFVTRTYLNGLDFINICLIHNYFPGFFYISTILLASIGIFLKALFTSNPFRSLYSRYKNLEKWWRSNNYNGEEEFNEIALSLCLLLTSNDYKIFKKSDNVKSVDEVAAFSNSYVVSGHLNQLQSTPEDLLSRKEMTTDSQLPGFARTYLGLFELVRTIILTYSRLLKNLLWSKNFESSIDKKPRVGKRKKRDLNKYVTEKNYKKFLYKPDVKELNIESDLRSLELLLPEDDSSKDYFPPRKIDESVSDEEFDSDMESQLIIDEEKELTHLSSNAVDSDDLEEIAWNISMWSILNYEMDVHNKVNGPLTRSQYGKRNPQGVLVDVVIERLLHHTNSRYMYKRLNMKDDDKLEFKFDFAFDSCDEVEEMDLSCLICKVNKRNIVTWPCRCLALCDDCRISLGYKGFATCVSCDSEVKGYSKLNIV.

Residues 1-78 (MSTNILQHVK…TLQLAKVGIR (78 aa)) lie on the Perinuclear space side of the membrane. N-linked (GlcNAc...) asparagine glycans are attached at residues asparagine 24, asparagine 34, asparagine 46, and asparagine 66. Residues 79–99 (MFFSYSVSKYAVLCFSTAIIL) traverse the membrane as a helical segment. At 100-126 (NRLTVMSSLRSNSTNIRLPLWSKTLLH) the chain is on the nuclear side. Residues 127–147 (LVATLSLVKALLQILSQFGLM) form a helical membrane-spanning segment. Residues 148-156 (HELHVSDTD) lie on the Perinuclear space side of the membrane. The chain crosses the membrane as a helical span at residues 157–177 (FYALSVYLFVALSDCIEIFIS). Over 178–181 (STTN) the chain is Nuclear. A helical transmembrane segment spans residues 182-202 (VPSLICSDFSIWGLSLNLYII). At 203 to 277 (SKMPAGQQHI…NICLIHNYFP (75 aa)) the chain is on the perinuclear space side. The helical transmembrane segment at 278–298 (GFFYISTILLASIGIFLKALF) threads the bilayer. The Nuclear segment spans residues 299-676 (TSNPFRSLYS…VKGYSKLNIV (378 aa)). An RING-type; atypical zinc finger spans residues 624-664 (CLICKVNKRNIVTWPCRCLALCDDCRISLGYKGFATCVSCD).

As to quaternary structure, component of the Asi complex, which contains ASI1, ASI2 and ASI3. Interacts directly with ASI1.

The protein resides in the nucleus inner membrane. It carries out the reaction S-ubiquitinyl-[E2 ubiquitin-conjugating enzyme]-L-cysteine + [acceptor protein]-L-lysine = [E2 ubiquitin-conjugating enzyme]-L-cysteine + N(6)-ubiquitinyl-[acceptor protein]-L-lysine.. In terms of biological role, part of the nuclear inner membrane (INM)-specific branch of the ER-associated degradation (ERAD) pathway, required for the elimination of misfolded proteins in the INM, a specialized ER subdomain. Required for ERG11 degradation. Negative regulator of SPS-sensor signaling. Together with ASI2 and ASI3, prevents the unprocessed precursor forms of STP1 and STP2 that escape cytoplasmic anchoring from inducing SPS-sensor-regulated genes in the absence of inducing signals. Controls amino acid permease (AAP) gene expression in response to amino acid availability, a process mediated by the transcription factors STP1 and STP1. This Saccharomyces cerevisiae (strain ATCC 204508 / S288c) (Baker's yeast) protein is Probable ERAD-associated E3 ubiquitin-protein ligase ASI1 (ASI3).